Reading from the N-terminus, the 569-residue chain is Proline--tRNA ligase (569 aa).

Belongs to the class-II aminoacyl-tRNA synthetase family. ProS type 1 subfamily. Homodimer.

Its subcellular location is the cytoplasm. The catalysed reaction is tRNA(Pro) + L-proline + ATP = L-prolyl-tRNA(Pro) + AMP + diphosphate. Catalyzes the attachment of proline to tRNA(Pro) in a two-step reaction: proline is first activated by ATP to form Pro-AMP and then transferred to the acceptor end of tRNA(Pro). As ProRS can inadvertently accommodate and process non-cognate amino acids such as alanine and cysteine, to avoid such errors it has two additional distinct editing activities against alanine. One activity is designated as 'pretransfer' editing and involves the tRNA(Pro)-independent hydrolysis of activated Ala-AMP. The other activity is designated 'posttransfer' editing and involves deacylation of mischarged Ala-tRNA(Pro). The misacylated Cys-tRNA(Pro) is not edited by ProRS. In Levilactobacillus brevis (strain ATCC 367 / BCRC 12310 / CIP 105137 / JCM 1170 / LMG 11437 / NCIMB 947 / NCTC 947) (Lactobacillus brevis), this protein is Proline--tRNA ligase.